A 307-amino-acid chain; its full sequence is Follistatin-related protein 1 (307 aa).

Residues 1 to 19 (MMWRRWLALALVAVAWVHA) form the signal peptide. The Follistatin-like domain maps to 29–52 (ICANVFCGAGRECAVTEKGEPTCL). 5 disulfide bridges follow: Cys-30-Cys-41, Cys-35-Cys-51, Cys-53-Cys-83, Cys-57-Cys-76, and Cys-65-Cys-97. The Kazal-like domain maps to 47–99 (GEPTCLCIEQCKPHKRPVCGSNGKTYLNHCELHRDACLTGSKIQVDYDGHCKE). The N-linked (GlcNAc...) asparagine glycan is linked to Asn-143. An EF-hand 1 domain is found at 143–177 (NYSEILDKYFKNFDNGDSRLDSSEFLKFVEQNETA). Ser-164 is subject to Phosphoserine. Asn-174 and Asn-179 each carry an N-linked (GlcNAc...) asparagine glycan. Residues 192 to 227 (LRGLCVDALIELSDENADWKLSFQEFLKCLNPSFNP) form the EF-hand 2 domain. One can recognise a VWFC domain in the interval 232 to 286 (CALEDETYADGAETEVDCNRCVCACGNWVCTAMTCDGKNQKGAQTQAEEEMTRYV).

In terms of assembly, homodimer. Interacts with SCN10A. Interacts with DIP2A; DIP2A may act as a cell surface receptor for FSTL1. Interacts with BMP4. Interacts with CD14; this interaction promotes TL4-mediated signaling cascade.

The protein resides in the secreted. Secreted glycoprotein that is involved in various physiological processes, such as angiogenesis, regulation of the immune response, cell proliferation and differentiation. Plays a role in the development of the central nervous system, skeletal system, lungs, and ureter. Promotes endothelial cell survival, migration and differentiation into network structures in an AKT-dependent manner. Also promotes survival of cardiac myocytes. Initiates various signaling cascades by activating different receptors on the cell surface such as DIP2A, TLR4 or BMP receptors. The protein is Follistatin-related protein 1 (FSTL1) of Bos taurus (Bovine).